The following is a 65-amino-acid chain: Large ribosomal subunit protein bL35 (65 aa).

The segment at 1–26 is disordered; the sequence is MPKIKTVRGAAKRFKKTASGGFKRKQ. Basic residues predominate over residues 10-26; sequence AAKRFKKTASGGFKRKQ.

This sequence belongs to the bacterial ribosomal protein bL35 family.

The protein is Large ribosomal subunit protein bL35 of Actinobacillus succinogenes (strain ATCC 55618 / DSM 22257 / CCUG 43843 / 130Z).